A 50-amino-acid polypeptide reads, in one-letter code: Light-harvesting protein B-880 alpha chain (50 aa).

Residues 1-12 (MYKLWLLFDPRR) are Cytoplasmic-facing. The chain crosses the membrane as a helical span at residues 13 to 33 (ALVALSAFLFVLALIIHFIAL). Histidine 29 is an a bacteriochlorophyll binding site. Topologically, residues 34–50 (STDRFNWLEGKPAVKAA) are periplasmic.

It belongs to the antenna complex alpha subunit family. In terms of assembly, the core complex is formed by different alpha and beta chains, binding bacteriochlorophyll molecules, and arranged most probably in tetrameric structures disposed around the reaction center. The non-pigmented gamma chains may constitute additional components.

It localises to the cell inner membrane. Functionally, antenna complexes are light-harvesting systems, which transfer the excitation energy to the reaction centers. The polypeptide is Light-harvesting protein B-880 alpha chain (Rhodoblastus acidophilus (Rhodopseudomonas acidophila)).